The sequence spans 269 residues: Putative phosphoenolpyruvate synthase regulatory protein (269 aa).

ADP is bound at residue Gly-149–Thr-156.

Belongs to the pyruvate, phosphate/water dikinase regulatory protein family. PSRP subfamily.

It carries out the reaction [pyruvate, water dikinase] + ADP = [pyruvate, water dikinase]-phosphate + AMP + H(+). It catalyses the reaction [pyruvate, water dikinase]-phosphate + phosphate + H(+) = [pyruvate, water dikinase] + diphosphate. Its function is as follows. Bifunctional serine/threonine kinase and phosphorylase involved in the regulation of the phosphoenolpyruvate synthase (PEPS) by catalyzing its phosphorylation/dephosphorylation. In Colwellia psychrerythraea (strain 34H / ATCC BAA-681) (Vibrio psychroerythus), this protein is Putative phosphoenolpyruvate synthase regulatory protein.